Reading from the N-terminus, the 527-residue chain is Glutamate--cysteine ligase (527 aa).

It belongs to the glutamate--cysteine ligase type 1 family. Type 1 subfamily.

The catalysed reaction is L-cysteine + L-glutamate + ATP = gamma-L-glutamyl-L-cysteine + ADP + phosphate + H(+). It functions in the pathway sulfur metabolism; glutathione biosynthesis; glutathione from L-cysteine and L-glutamate: step 1/2. In Pseudomonas aeruginosa (strain LESB58), this protein is Glutamate--cysteine ligase.